Consider the following 252-residue polypeptide: Ribosomal RNA small subunit methyltransferase J (252 aa).

Residues 126-127 (ER) and Asp-176 each bind S-adenosyl-L-methionine.

This sequence belongs to the methyltransferase superfamily. RsmJ family.

It is found in the cytoplasm. The catalysed reaction is guanosine(1516) in 16S rRNA + S-adenosyl-L-methionine = N(2)-methylguanosine(1516) in 16S rRNA + S-adenosyl-L-homocysteine + H(+). Functionally, specifically methylates the guanosine in position 1516 of 16S rRNA. In Bdellovibrio bacteriovorus (strain ATCC 15356 / DSM 50701 / NCIMB 9529 / HD100), this protein is Ribosomal RNA small subunit methyltransferase J.